The following is a 273-amino-acid chain: Probable nicotinate-nucleotide pyrophosphorylase [carboxylating] (273 aa).

Substrate contacts are provided by residues Arg91, 124 to 126 (TRK), Arg148, Lys158, Glu188, Asp209, 235 to 237 (SGN), and 256 to 258 (VGA).

The protein belongs to the NadC/ModD family. In terms of assembly, hexamer formed by 3 homodimers.

It carries out the reaction nicotinate beta-D-ribonucleotide + CO2 + diphosphate = quinolinate + 5-phospho-alpha-D-ribose 1-diphosphate + 2 H(+). It participates in cofactor biosynthesis; NAD(+) biosynthesis; nicotinate D-ribonucleotide from quinolinate: step 1/1. Its function is as follows. Involved in the catabolism of quinolinic acid (QA). In Helicobacter pylori (strain J99 / ATCC 700824) (Campylobacter pylori J99), this protein is Probable nicotinate-nucleotide pyrophosphorylase [carboxylating] (nadC).